A 210-amino-acid chain; its full sequence is Placenta-expressed transcript 1 protein (210 aa).

The signal sequence occupies residues 1-26 (MAVLGSPLLPLRLFLCFGLLFFSASC). The Extracellular segment spans residues 27–189 (TDHPDQCMIF…THKNSANRVF (163 aa)). Residues Asn-67 and Asn-94 are each glycosylated (N-linked (GlcNAc...) asparagine). Residues 190–209 (RSPVRDAIQILLAFLTSKLL) form a helical membrane-spanning segment. Position 210 (Phe-210) is a topological domain, cytoplasmic.

As to expression, highly expressed in placenta.

The protein localises to the membrane. The protein resides in the apical cell membrane. Functionally, modulates leading keratinocyte migration and cellular adhesion to matrix proteins during a wound-healing response and promotes wound repair. May play a role during trichilemmal differentiation of the hair follicle. The chain is Placenta-expressed transcript 1 protein (PLET1) from Sus scrofa (Pig).